The chain runs to 284 residues: uncharacterized protein (284 aa).

Residues 12–32 (ILFILFVVAFCVYLVPRVAIN) traverse the membrane as a helical segment.

This sequence belongs to the serine esterase family.

Its subcellular location is the membrane. This is an uncharacterized protein from Escherichia coli O157:H7.